A 108-amino-acid polypeptide reads, in one-letter code: FK506-binding protein 1 (108 aa).

In terms of domain architecture, PPIase FKBP-type spans 20–108 (GDSVTIHYVG…KFEVELLKIN (89 aa)).

Belongs to the FKBP-type PPIase family. FKBP1 subfamily.

Its subcellular location is the cytoplasm. It catalyses the reaction [protein]-peptidylproline (omega=180) = [protein]-peptidylproline (omega=0). Inhibited by both FK506 and rapamycin. Its function is as follows. PPIases accelerate the folding of proteins. It catalyzes the cis-trans isomerization of proline imidic peptide bonds in oligopeptides. This chain is FK506-binding protein 1 (FPR1), found in Cryptococcus neoformans var. neoformans serotype D (strain JEC21 / ATCC MYA-565) (Filobasidiella neoformans).